Reading from the N-terminus, the 220-residue chain is Putative vesicle-associated membrane protein 726 (220 aa).

Residues 1 to 196 lie on the Cytoplasmic side of the membrane; sequence MGQQSLIYSF…LWFENMKIKL (196 aa). In terms of domain architecture, Longin spans 10 to 114; sequence FVARGTVILA…SLNKEFGSKL (105 aa). In terms of domain architecture, v-SNARE coiled-coil homology spans 130-190; that stretch reads KLSKVKAQVT…TKMKRKLWFE (61 aa). Residues 197-217 traverse the membrane as a helical; Anchor for type IV membrane protein segment; the sequence is IVFGIIVALILIIILSVCHGF. Residues 218 to 220 lie on the Vesicular side of the membrane; sequence KCT.

This sequence belongs to the synaptobrevin family. Expressed in flowers, leaves, stems and roots.

Its subcellular location is the cell membrane. The protein resides in the early endosome membrane. In terms of biological role, involved in the targeting and/or fusion of transport vesicles to their target membrane. The chain is Putative vesicle-associated membrane protein 726 (VAMP726) from Arabidopsis thaliana (Mouse-ear cress).